We begin with the raw amino-acid sequence, 424 residues long: UDP-N-acetylglucosamine 1-carboxyvinyltransferase (424 aa).

22-23 (KN) serves as a coordination point for phosphoenolpyruvate. UDP-N-acetyl-alpha-D-glucosamine is bound at residue Arg98. The Proton donor role is filled by Cys122. Residue Cys122 is modified to 2-(S-cysteinyl)pyruvic acid O-phosphothioketal. UDP-N-acetyl-alpha-D-glucosamine contacts are provided by residues 127-131 (RPVDQ), Asp312, and Ile334.

The protein belongs to the EPSP synthase family. MurA subfamily.

The protein resides in the cytoplasm. It catalyses the reaction phosphoenolpyruvate + UDP-N-acetyl-alpha-D-glucosamine = UDP-N-acetyl-3-O-(1-carboxyvinyl)-alpha-D-glucosamine + phosphate. It participates in cell wall biogenesis; peptidoglycan biosynthesis. Its function is as follows. Cell wall formation. Adds enolpyruvyl to UDP-N-acetylglucosamine. This Xanthomonas campestris pv. campestris (strain B100) protein is UDP-N-acetylglucosamine 1-carboxyvinyltransferase.